A 473-amino-acid chain; its full sequence is Photosystem II CP43 reaction center protein (473 aa).

Residues M1–E14 constitute a propeptide that is removed on maturation. T15 is modified (N-acetylthreonine). Residue T15 is modified to Phosphothreonine. 5 consecutive transmembrane segments (helical) span residues L69–A93, L134–N155, K178–T200, K255–S275, and W291–A312. E367 provides a ligand contact to [CaMn4O5] cluster. A helical transmembrane segment spans residues R447–P471.

It belongs to the PsbB/PsbC family. PsbC subfamily. As to quaternary structure, PSII is composed of 1 copy each of membrane proteins PsbA, PsbB, PsbC, PsbD, PsbE, PsbF, PsbH, PsbI, PsbJ, PsbK, PsbL, PsbM, PsbT, PsbX, PsbY, PsbZ, Psb30/Ycf12, at least 3 peripheral proteins of the oxygen-evolving complex and a large number of cofactors. It forms dimeric complexes. The cofactor is Binds multiple chlorophylls and provides some of the ligands for the Ca-4Mn-5O cluster of the oxygen-evolving complex. It may also provide a ligand for a Cl- that is required for oxygen evolution. PSII binds additional chlorophylls, carotenoids and specific lipids..

It is found in the plastid. It localises to the chloroplast thylakoid membrane. One of the components of the core complex of photosystem II (PSII). It binds chlorophyll and helps catalyze the primary light-induced photochemical processes of PSII. PSII is a light-driven water:plastoquinone oxidoreductase, using light energy to abstract electrons from H(2)O, generating O(2) and a proton gradient subsequently used for ATP formation. This Sorghum bicolor (Sorghum) protein is Photosystem II CP43 reaction center protein.